The primary structure comprises 369 residues: MEIMFPIKPPTTERFELSAEFIDYLDRVIKSKEMPTSLKAIFTISNFKSADEFLYDLKKSGFKLISDYGCVFYLTKKSEYGDVRYLALFTENHNPIFFTLATKTKEIPPTLLEYLNKSPYISNLWISLTKMDELVESLKKEYSDQIMGTYFTGTYSPFFKRKALIRPNIERFVEYRGDDAIQIYEEYKKYYGILPRVFEFNLIGYGTYRLDYRGILVIKARSSFNFIYQLMDSIVSEVEKSKQKITRARVLDKFMKTKRKEFKINIKIPWSIKLTEQLECVKFDDFVKVLEPEWQFLPLDIDISENAENSEFLDFSYFRVIDLIKPSEFSVVYNNKNLKIYPSDKLDLGSSLRFFQSVRSSLDPSAYLT.

This is an uncharacterized protein from Archaeoglobus fulgidus (strain ATCC 49558 / DSM 4304 / JCM 9628 / NBRC 100126 / VC-16).